The sequence spans 242 residues: UPF0246 protein SP_1547 (242 aa).

Belongs to the UPF0246 family.

The sequence is that of UPF0246 protein SP_1547 from Streptococcus pneumoniae serotype 4 (strain ATCC BAA-334 / TIGR4).